Here is a 147-residue protein sequence, read N- to C-terminus: D-aminoacyl-tRNA deacylase (147 aa).

Positions 136 to 137 (GP) match the Gly-cisPro motif, important for rejection of L-amino acids motif.

The protein belongs to the DTD family. As to quaternary structure, homodimer.

Its subcellular location is the cytoplasm. It carries out the reaction glycyl-tRNA(Ala) + H2O = tRNA(Ala) + glycine + H(+). The enzyme catalyses a D-aminoacyl-tRNA + H2O = a tRNA + a D-alpha-amino acid + H(+). Its function is as follows. An aminoacyl-tRNA editing enzyme that deacylates mischarged D-aminoacyl-tRNAs. Also deacylates mischarged glycyl-tRNA(Ala), protecting cells against glycine mischarging by AlaRS. Acts via tRNA-based rather than protein-based catalysis; rejects L-amino acids rather than detecting D-amino acids in the active site. By recycling D-aminoacyl-tRNA to D-amino acids and free tRNA molecules, this enzyme counteracts the toxicity associated with the formation of D-aminoacyl-tRNA entities in vivo and helps enforce protein L-homochirality. The chain is D-aminoacyl-tRNA deacylase from Streptococcus dysgalactiae subsp. equisimilis (Streptococcus equisimilis).